The following is a 507-amino-acid chain: Maturase K (507 aa).

The protein belongs to the intron maturase 2 family. MatK subfamily.

The protein resides in the plastid. It is found in the chloroplast. Functionally, usually encoded in the trnK tRNA gene intron. Probably assists in splicing its own and other chloroplast group II introns. The polypeptide is Maturase K (Browningia hertlingiana (Cactus)).